A 138-amino-acid polypeptide reads, in one-letter code: Putative pre-16S rRNA nuclease (138 aa).

Belongs to the YqgF nuclease family.

It is found in the cytoplasm. In terms of biological role, could be a nuclease involved in processing of the 5'-end of pre-16S rRNA. This is Putative pre-16S rRNA nuclease from Escherichia coli O7:K1 (strain IAI39 / ExPEC).